A 452-amino-acid polypeptide reads, in one-letter code: Bifunctional protein GlmU (452 aa).

The pyrophosphorylase stretch occupies residues 1–226 (MSLHIIILAA…LHEVEGVNNR (226 aa)). UDP-N-acetyl-alpha-D-glucosamine-binding positions include 8-11 (LAAG), lysine 22, glutamine 73, 78-79 (GT), 100-102 (YGD), glycine 136, glutamate 151, asparagine 166, and asparagine 224. Aspartate 102 lines the Mg(2+) pocket. Residue asparagine 224 participates in Mg(2+) binding. A linker region spans residues 227 to 247 (IQLAALERAYQQQVAEELMLA). Positions 248–452 (GATLRDPARV…IDGWTRPVKK (205 aa)) are N-acetyltransferase. 2 residues coordinate UDP-N-acetyl-alpha-D-glucosamine: arginine 330 and lysine 348. The active-site Proton acceptor is histidine 360. The UDP-N-acetyl-alpha-D-glucosamine site is built by tyrosine 363 and asparagine 374. Residues alanine 377, 383 to 384 (NY), serine 402, alanine 420, and arginine 437 contribute to the acetyl-CoA site.

It in the N-terminal section; belongs to the N-acetylglucosamine-1-phosphate uridyltransferase family. This sequence in the C-terminal section; belongs to the transferase hexapeptide repeat family. As to quaternary structure, homotrimer. Mg(2+) serves as cofactor.

It localises to the cytoplasm. The catalysed reaction is alpha-D-glucosamine 1-phosphate + acetyl-CoA = N-acetyl-alpha-D-glucosamine 1-phosphate + CoA + H(+). It catalyses the reaction N-acetyl-alpha-D-glucosamine 1-phosphate + UTP + H(+) = UDP-N-acetyl-alpha-D-glucosamine + diphosphate. It participates in nucleotide-sugar biosynthesis; UDP-N-acetyl-alpha-D-glucosamine biosynthesis; N-acetyl-alpha-D-glucosamine 1-phosphate from alpha-D-glucosamine 6-phosphate (route II): step 2/2. The protein operates within nucleotide-sugar biosynthesis; UDP-N-acetyl-alpha-D-glucosamine biosynthesis; UDP-N-acetyl-alpha-D-glucosamine from N-acetyl-alpha-D-glucosamine 1-phosphate: step 1/1. It functions in the pathway bacterial outer membrane biogenesis; LPS lipid A biosynthesis. Functionally, catalyzes the last two sequential reactions in the de novo biosynthetic pathway for UDP-N-acetylglucosamine (UDP-GlcNAc). The C-terminal domain catalyzes the transfer of acetyl group from acetyl coenzyme A to glucosamine-1-phosphate (GlcN-1-P) to produce N-acetylglucosamine-1-phosphate (GlcNAc-1-P), which is converted into UDP-GlcNAc by the transfer of uridine 5-monophosphate (from uridine 5-triphosphate), a reaction catalyzed by the N-terminal domain. The chain is Bifunctional protein GlmU from Hahella chejuensis (strain KCTC 2396).